Here is a 582-residue protein sequence, read N- to C-terminus: DNA primase (582 aa).

The CHC2-type zinc-finger motif lies at Cys-40–Cys-64. Positions Glu-259 to Pro-341 constitute a Toprim domain. Residues Glu-265, Asp-309, and Asp-311 each contribute to the Mg(2+) site.

Belongs to the DnaG primase family. As to quaternary structure, monomer. Interacts with DnaB. The cofactor is Zn(2+). Mg(2+) is required as a cofactor.

The catalysed reaction is ssDNA + n NTP = ssDNA/pppN(pN)n-1 hybrid + (n-1) diphosphate.. RNA polymerase that catalyzes the synthesis of short RNA molecules used as primers for DNA polymerase during DNA replication. The protein is DNA primase of Pasteurella multocida (strain Pm70).